The chain runs to 218 residues: 7-cyano-7-deazaguanine synthase (218 aa).

10 to 20 (FSGGQDSTTCL) serves as a coordination point for ATP. The Zn(2+) site is built by C186, C195, C198, and C201.

It belongs to the QueC family. Homodimer. Zn(2+) serves as cofactor.

The enzyme catalyses 7-carboxy-7-deazaguanine + NH4(+) + ATP = 7-cyano-7-deazaguanine + ADP + phosphate + H2O + H(+). It participates in purine metabolism; 7-cyano-7-deazaguanine biosynthesis. In terms of biological role, catalyzes the ATP-dependent conversion of 7-carboxy-7-deazaguanine (CDG) to 7-cyano-7-deazaguanine (preQ(0)). The protein is 7-cyano-7-deazaguanine synthase of Exiguobacterium sibiricum (strain DSM 17290 / CCUG 55495 / CIP 109462 / JCM 13490 / 255-15).